The primary structure comprises 640 residues: Threonine--tRNA ligase (640 aa).

A catalytic region spans residues 224-525 (DHRKLGKELD…LTEHYAGAFP (302 aa)). Residues C323, H374, and H502 each coordinate Zn(2+).

The protein belongs to the class-II aminoacyl-tRNA synthetase family. In terms of assembly, homodimer. It depends on Zn(2+) as a cofactor.

Its subcellular location is the cytoplasm. It carries out the reaction tRNA(Thr) + L-threonine + ATP = L-threonyl-tRNA(Thr) + AMP + diphosphate + H(+). In terms of biological role, catalyzes the attachment of threonine to tRNA(Thr) in a two-step reaction: L-threonine is first activated by ATP to form Thr-AMP and then transferred to the acceptor end of tRNA(Thr). Also edits incorrectly charged L-seryl-tRNA(Thr). In Tropheryma whipplei (strain TW08/27) (Whipple's bacillus), this protein is Threonine--tRNA ligase.